Consider the following 497-residue polypeptide: Cytochrome P450 CYP94D108 (497 aa).

A helical membrane pass occupies residues 6-26; sequence LLSLALLLLAAAAAAAFVLFP. Residue C439 participates in heme binding.

Belongs to the cytochrome P450 family. As to expression, mainly expressed in roots and, at low levels, in leaves, fruits and stems.

Its subcellular location is the membrane. It functions in the pathway steroid metabolism; cholesterol metabolism. Functionally, involved in the biosynthesis of spiroketal steroid and saponin natural products from cholesterol such as diosgenin and analogs (e.g. furostanol and spirostanol), plant defense compounds used as main precursors for the industrial production of steroid hormones. During the 5,6-spiroketalization of cholesterol, may catalyze the 27-monohydroxylation of furostanol-type steroid to an intermediate product that undergoes a stereospecific formation of the terminal heterocycle to yield diosgenin. The polypeptide is Cytochrome P450 CYP94D108 (Paris polyphylla (Daiswa polyphylla)).